The primary structure comprises 391 residues: Na(+)/H(+) antiporter NhaA (391 aa).

12 consecutive transmembrane segments (helical) span residues 9–29 (FQLE…ALII), 36–56 (YLYS…LNIA), 59–79 (LLLW…GLEV), 95–115 (ILPA…YWFI), 123–143 (VAGW…VLAL), 154–174 (LFLM…IALF), 177–197 (GTLS…LIAM), 213–235 (LILW…ALAL), 259–279 (WVAY…SLAG), 293–313 (IAVG…WLAV), 329–349 (ILGV…VGSL), and 364–384 (MGIL…TAMA).

The protein belongs to the NhaA Na(+)/H(+) (TC 2.A.33) antiporter family.

It localises to the cell inner membrane. The catalysed reaction is Na(+)(in) + 2 H(+)(out) = Na(+)(out) + 2 H(+)(in). In terms of biological role, na(+)/H(+) antiporter that extrudes sodium in exchange for external protons. This is Na(+)/H(+) antiporter NhaA from Pseudomonas putida (strain GB-1).